The sequence spans 396 residues: Elongation factor Tu (396 aa).

One can recognise a tr-type G domain in the interval Lys10–Lys206. Residues Gly19–Thr26 are G1. Residue Gly19–Thr26 participates in GTP binding. Residue Thr26 coordinates Mg(2+). Positions Gly60–Ser64 are G2. Positions Asp81–Gly84 are G3. Residues Asp81–His85 and Asn136–Asp139 each bind GTP. The tract at residues Asn136–Asp139 is G4. The G5 stretch occupies residues Ser174–Leu176.

This sequence belongs to the TRAFAC class translation factor GTPase superfamily. Classic translation factor GTPase family. EF-Tu/EF-1A subfamily. Monomer.

The protein localises to the cytoplasm. It carries out the reaction GTP + H2O = GDP + phosphate + H(+). GTP hydrolase that promotes the GTP-dependent binding of aminoacyl-tRNA to the A-site of ribosomes during protein biosynthesis. The chain is Elongation factor Tu from Dichelobacter nodosus (strain VCS1703A).